The following is a 293-amino-acid chain: Acetylglutamate kinase (293 aa).

Substrate-binding positions include G65 to G66, R87, and N180.

Belongs to the acetylglutamate kinase family. ArgB subfamily.

The protein resides in the cytoplasm. It catalyses the reaction N-acetyl-L-glutamate + ATP = N-acetyl-L-glutamyl 5-phosphate + ADP. It participates in amino-acid biosynthesis; L-arginine biosynthesis; N(2)-acetyl-L-ornithine from L-glutamate: step 2/4. Its function is as follows. Catalyzes the ATP-dependent phosphorylation of N-acetyl-L-glutamate. In Cereibacter sphaeroides (strain ATCC 17029 / ATH 2.4.9) (Rhodobacter sphaeroides), this protein is Acetylglutamate kinase.